Here is a 413-residue protein sequence, read N- to C-terminus: Cell division protein FtsA (413 aa).

Belongs to the FtsA/MreB family. Self-interacts. Interacts with FtsZ.

The protein resides in the cell inner membrane. Cell division protein that is involved in the assembly of the Z ring. May serve as a membrane anchor for the Z ring. The protein is Cell division protein FtsA of Borreliella burgdorferi (strain ATCC 35210 / DSM 4680 / CIP 102532 / B31) (Borrelia burgdorferi).